The sequence spans 442 residues: NADH-quinone oxidoreductase subunit D (442 aa).

The protein belongs to the complex I 49 kDa subunit family. In terms of assembly, NDH-1 is composed of 14 different subunits. Subunits NuoB, C, D, E, F, and G constitute the peripheral sector of the complex.

The protein resides in the cell membrane. The catalysed reaction is a quinone + NADH + 5 H(+)(in) = a quinol + NAD(+) + 4 H(+)(out). In terms of biological role, NDH-1 shuttles electrons from NADH, via FMN and iron-sulfur (Fe-S) centers, to quinones in the respiratory chain. The immediate electron acceptor for the enzyme in this species is believed to be a menaquinone. Couples the redox reaction to proton translocation (for every two electrons transferred, four hydrogen ions are translocated across the cytoplasmic membrane), and thus conserves the redox energy in a proton gradient. This chain is NADH-quinone oxidoreductase subunit D, found in Mycolicibacterium vanbaalenii (strain DSM 7251 / JCM 13017 / BCRC 16820 / KCTC 9966 / NRRL B-24157 / PYR-1) (Mycobacterium vanbaalenii).